The chain runs to 690 residues: Beta-galactosidase (690 aa).

Asn-173 is a substrate binding site. Glu-174 acts as the Proton donor in catalysis. Trp-345 serves as a coordination point for substrate.

It belongs to the glycosyl hydrolase 42 family.

The enzyme catalyses Hydrolysis of terminal non-reducing beta-D-galactose residues in beta-D-galactosides.. With respect to regulation, activity stimulated by beta-mercaptoethanol. Its function is as follows. Highly specific towards beta-D-galactoside substrates. Hydrolyzes 5-bromo-4-chloro-3-indolyl-beta-D-galactopyranoside (X-Gal) and o-nitrophenyl-beta-D-galactopyranoside (ONPG). Has activity against p-nitrophenyl(pNP)-beta-D-galactoside, but not significantly at all towards pNP-alpha-D-galactoside, pNP-beta-D-glucoside, pNP-beta-D-mannoside, pNP-beta-L-fucoside, pNP-beta-D-xyloside, pNP-beta-L-arabinoside, pNP-beta-D-galuronide, pNP-beta-D-glucuronide, pNP-beta-D-lactoside or pNP-beta-D-cellobioside. The polypeptide is Beta-galactosidase (Arthrobacter sp).